The primary structure comprises 464 residues: Soluble pyridine nucleotide transhydrogenase (464 aa).

Residue 35 to 44 (DDRPQVGGNC) participates in FAD binding.

This sequence belongs to the class-I pyridine nucleotide-disulfide oxidoreductase family. Requires FAD as cofactor.

The protein resides in the cytoplasm. The enzyme catalyses NAD(+) + NADPH = NADH + NADP(+). Its function is as follows. Conversion of NADPH, generated by peripheral catabolic pathways, to NADH, which can enter the respiratory chain for energy generation. The polypeptide is Soluble pyridine nucleotide transhydrogenase (Azotobacter vinelandii (strain DJ / ATCC BAA-1303)).